The sequence spans 319 residues: Ribonuclease Z (319 aa).

Positions 62, 64, 66, 67, 145, 215, and 273 each coordinate Zn(2+). Asp66 functions as the Proton acceptor in the catalytic mechanism.

This sequence belongs to the RNase Z family. In terms of assembly, homodimer. It depends on Zn(2+) as a cofactor.

The catalysed reaction is Endonucleolytic cleavage of RNA, removing extra 3' nucleotides from tRNA precursor, generating 3' termini of tRNAs. A 3'-hydroxy group is left at the tRNA terminus and a 5'-phosphoryl group is left at the trailer molecule.. Zinc phosphodiesterase, which displays some tRNA 3'-processing endonuclease activity. Probably involved in tRNA maturation, by removing a 3'-trailer from precursor tRNA. The chain is Ribonuclease Z from Borrelia hermsii (strain HS1 / DAH).